The chain runs to 674 residues: MSKGLFLIWLISSFHLISFSTSSKDTSFVFNGFGQSNLALDGSATLLPNGLLQLAKDSQHQMGHAFIKKPIDFSSSKPLSFSTHFVCALVPKPGFEGGHGITFVISPTVDFTRAQPTRYMGIFNASTNGSPSSHLFAVELDTVRNPDFRETNNNHIGIDVNNPISVESAPASYFSKTAQKNVSINLSSGKPIQVWVDYHGNVLNVSVAPLEAEKPSLPLLSRSMNLSEIFSRRRLFVGFAAATGTSISYHYLLGWSFSTNRELSQLLDFSKLPQVPRPRAEHKKVQFALIIALPVILAIVVMAVLAGVYYHRKKKYAEVSEPWEKKYGTHRFSYKSLYIATKGFHKDRFLGRGGFGEVYRGDLPLNKTVAVKRVSHDGEQGMKQFVAEVVSMKSLKHRNLVPLLGYCRRKGELLLVSEYMPNGSLDQHLFDDQSPVLSWSQRFVILKGIASALFYLHTEAEQVVLHRDIKASNVMLDAELNGRLGDFGMARFHDHGGNAATTAAVGTVGYMAPELITMGASTITDVYAFGVFLLEVACGRKPVEFGVQVEKRFLIKWVCECWKKDSLLDAKDPRLGEEFVPEEVELVMKLGLLCTNIVPESRPAMGQVVLYLSGNLPLPDFSPYTLGIGSFTPVVVDAASLTVSFTSRNWSAPSASSSSANNSKDHEQPLEFKS.

The N-terminal stretch at Met-1–Ser-22 is a signal peptide. Residues Ser-23–Gln-286 lie on the Extracellular side of the membrane. The legume-lectin like stretch occupies residues Asp-25–Ser-258. Residues Asn-124, Asn-181, Asn-185, Asn-204, and Asn-225 are each glycosylated (N-linked (GlcNAc...) asparagine). A helical membrane pass occupies residues Phe-287 to Gly-307. At Val-308–Ser-674 the chain is on the cytoplasmic side. The Protein kinase domain occupies Phe-344 to Thr-625. Residues Leu-350–Val-358 and Lys-372 each bind ATP. Asp-468 serves as the catalytic Proton acceptor. Residues Asn-649 to Asn-662 are compositionally biased toward low complexity. The segment at Asn-649–Ser-674 is disordered. Residues Ser-663–Ser-674 show a composition bias toward basic and acidic residues.

In the C-terminal section; belongs to the protein kinase superfamily. Ser/Thr protein kinase family. This sequence in the N-terminal section; belongs to the leguminous lectin family.

The protein localises to the cell membrane. The catalysed reaction is L-seryl-[protein] + ATP = O-phospho-L-seryl-[protein] + ADP + H(+). The enzyme catalyses L-threonyl-[protein] + ATP = O-phospho-L-threonyl-[protein] + ADP + H(+). This chain is Probable L-type lectin-domain containing receptor kinase I.5 (LECRK15), found in Arabidopsis thaliana (Mouse-ear cress).